The sequence spans 426 residues: Histidine--tRNA ligase (426 aa).

Belongs to the class-II aminoacyl-tRNA synthetase family.

It localises to the cytoplasm. It carries out the reaction tRNA(His) + L-histidine + ATP = L-histidyl-tRNA(His) + AMP + diphosphate + H(+). The polypeptide is Histidine--tRNA ligase (hisS) (Thermoplasma volcanium (strain ATCC 51530 / DSM 4299 / JCM 9571 / NBRC 15438 / GSS1)).